The following is a 324-amino-acid chain: Aprataxin (324 aa).

The FHA-like domain maps to 23-72; sequence SVTLGRGPDTKIKDKKCSREQVELRADCNRGFVTVKQLGVNPTLVDDVVV. The segment at 100-160 is disordered; the sequence is TEDTSRSKPS…QGLKASMQDP (61 aa). The segment covering 111-125 has biased composition (polar residues); sequence RAQQIQSPTKTTADV. Positions 150–255 constitute an HIT domain; it reads SQGLKASMQD…ISQDFDSPCL (106 aa). 2 interaction with DNA substrate regions span residues 175–179 and 237–238; these read DKYPK and SM. The Histidine triad motif signature appears at 240 to 244; the sequence is HVHLH. His242 serves as the catalytic Tele-AMP-histidine intermediate. A C2H2-type zinc finger spans residues 299-321; it reads LRCHVCGKEQTTIPKLKDHLKTH.

Its subcellular location is the nucleus. It localises to the nucleoplasm. The protein resides in the nucleolus. It carries out the reaction a 5'-end adenosine-5'-diphospho-5'-2'-deoxyribonucleoside-DNA + H2O = a 5'-end 5'-phospho-2'-deoxyribonucleoside-DNA + AMP + 2 H(+). The enzyme catalyses a 5'-end adenosine-5'-diphospho-5'-ribonucleoside-2'-deoxyribonucleotide-DNA + H2O = a 5'-end 5'-phospho-ribonucleoside-2'-deoxyribonucleotide-DNA + AMP + 2 H(+). The catalysed reaction is a 3'-end 2'-deoxyribonucleotide-3'-diphospho-5'-guanosine-DNA + H2O = a 3'-end 2'-deoxyribonucleotide 3'-phosphate-DNA + GMP + 2 H(+). Functionally, DNA-binding protein involved in single-strand DNA break repair, double-strand DNA break repair and base excision repair. Resolves abortive DNA ligation intermediates formed either at base excision sites, or when DNA ligases attempt to repair non-ligatable breaks induced by reactive oxygen species. Catalyzes the release of adenylate groups covalently linked to 5'-phosphate termini, resulting in the production of 5'-phosphate termini that can be efficiently rejoined. Also able to hydrolyze adenosine 5'-monophosphoramidate (AMP-NH(2)) and diadenosine tetraphosphate (AppppA), but with lower catalytic activity. Likewise, catalyzes the release of 3'-linked guanosine (DNAppG) and inosine (DNAppI) from DNA, but has higher specific activity with 5'-linked adenosine (AppDNA). The sequence is that of Aprataxin (aptx) from Danio rerio (Zebrafish).